The following is a 165-amino-acid chain: Pro-MCH (165 aa).

The signal sequence occupies residues 1–21 (MAKMNLSSYILILTFSLFSQG). An Isoleucine amide modification is found at Ile143. Cys153 and Cys162 form a disulfide bridge.

It belongs to the melanin-concentrating hormone family. Differentially processed in the brain and in peripheral organs producing two neuropeptides; NEI and MCH. A third peptide, NGE, may also be produced. Preferential processing in neurons by prohormone convertase 2 (PC2) generates NEI. MCH is generated in neurons of the lateral hypothalmic area by several prohormone convertases including PC1/3, PC2 and PC5/6. In terms of tissue distribution, predominantly expressed in lateral hypothalamus, also detected in pallidum, neocortex and cerebellum. Also found in thymus, brown adipose tissue, duodenum and testis (spermatogonia, early spermatocytes and Sertoli cells). No expression in peripheral blood. In brain exclusively mature MCH and NEI peptides are present. In peripheral tissues a large product, encompassing the NEI and MCH domains of the precursor, is found predominantly.

It localises to the secreted. Its function is as follows. MCH may act as a neurotransmitter or neuromodulator in a broad array of neuronal functions directed toward the regulation of goal-directed behavior, such as food intake, and general arousal. May also have a role in spermatocyte differentiation. The chain is Pro-MCH (PMCH) from Homo sapiens (Human).